The sequence spans 274 residues: Nitrogenase iron protein (274 aa).

An ATP-binding site is contributed by 8-15; that stretch reads GKGGIGKS. Cysteine 94 provides a ligand contact to [4Fe-4S] cluster. Residue arginine 97 is modified to ADP-ribosylarginine; by dinitrogenase reductase ADP-ribosyltransferase. Cysteine 131 contributes to the [4Fe-4S] cluster binding site.

It belongs to the NifH/BchL/ChlL family. In terms of assembly, homodimer. It depends on [4Fe-4S] cluster as a cofactor. In terms of processing, the reversible ADP-ribosylation of Arg-97 inactivates the nitrogenase reductase and regulates nitrogenase activity.

The enzyme catalyses N2 + 8 reduced [2Fe-2S]-[ferredoxin] + 16 ATP + 16 H2O = H2 + 8 oxidized [2Fe-2S]-[ferredoxin] + 2 NH4(+) + 16 ADP + 16 phosphate + 6 H(+). In terms of biological role, the key enzymatic reactions in nitrogen fixation are catalyzed by the nitrogenase complex, which has 2 components: the iron protein and the molybdenum-iron protein. The polypeptide is Nitrogenase iron protein (Solidesulfovibrio magneticus (strain ATCC 700980 / DSM 13731 / RS-1) (Desulfovibrio magneticus)).